The sequence spans 220 residues: Glycerol-3-phosphate acyltransferase (220 aa).

Helical transmembrane passes span 4–24 (LTILMIILAYLGGSLSSAVLV), 53–73 (VAALVVLLLDVLKGTAPVYLA), 80–100 (PVYLGFIGVAACLGHMYPIFF), 116–136 (MPIGFTMGGAVIGTWLVVLLV), and 138–158 (GYSSLASIITVLLSPLFTYLI). Residues 193–220 (WGRQAQRRQEEVGEMDDVAQKRDERDKK) form a disordered region. Residues 210 to 220 (VAQKRDERDKK) show a composition bias toward basic and acidic residues.

It belongs to the PlsY family. In terms of assembly, probably interacts with PlsX.

It is found in the cell inner membrane. The catalysed reaction is an acyl phosphate + sn-glycerol 3-phosphate = a 1-acyl-sn-glycero-3-phosphate + phosphate. The protein operates within lipid metabolism; phospholipid metabolism. Functionally, catalyzes the transfer of an acyl group from acyl-phosphate (acyl-PO(4)) to glycerol-3-phosphate (G3P) to form lysophosphatidic acid (LPA). This enzyme utilizes acyl-phosphate as fatty acyl donor, but not acyl-CoA or acyl-ACP. The polypeptide is Glycerol-3-phosphate acyltransferase (Aeromonas salmonicida (strain A449)).